A 699-amino-acid polypeptide reads, in one-letter code: Tectonic-like complex member Mks1 (699 aa).

Disordered regions lie at residues 101–121 (RRSP…EGEI) and 373–396 (DGFS…IEED). Basic and acidic residues predominate over residues 108 to 119 (HEGEMEKDKNEG). Residues 434 to 560 (KRVSLLLELQ…RLQCIRPLGN (127 aa)) form the C2 B9-type domain. Positions 632–661 (LELGNDSSDDGDSNDDDVRSSSNPDTSRAT) are disordered.

As to quaternary structure, probable component of the tectonic-like complex (also named MKS complex), composed of B9d1, B9d2, Cc2d2a, Mks1 and tctn. In terms of tissue distribution, expressed in chordotonal neurons in the antennae (at protein level). Expressed in spermatids (at protein level).

It localises to the cytoplasm. Its subcellular location is the cytoskeleton. The protein localises to the cilium basal body. The protein resides in the microtubule organizing center. It is found in the centrosome. It localises to the centriole. Probable component of the tectonic-like complex (also named MKS complex), a complex localized at the transition zone of primary cilia. Required for ciliary structure and function. This Drosophila melanogaster (Fruit fly) protein is Tectonic-like complex member Mks1.